The chain runs to 209 residues: Transcription elongation factor A protein-like 4 (209 aa).

Methionine 1 bears the N-acetylmethionine mark. Positions 1 to 125 are disordered; it reads MEKLYNENEG…VPRKAKRKTN (125 aa). Basic and acidic residues predominate over residues 25 to 96; it reads QDERKPEVAC…GSEREGKPES (72 aa). Phosphoserine is present on residues serine 88 and serine 96.

It belongs to the TFS-II family. TFA subfamily.

The protein resides in the nucleus. In terms of biological role, may be involved in transcriptional regulation. The sequence is that of Transcription elongation factor A protein-like 4 (TCEAL4) from Pongo abelii (Sumatran orangutan).